The sequence spans 159 residues: 2-C-methyl-D-erythritol 2,4-cyclodiphosphate synthase (159 aa).

A divalent metal cation is bound by residues Asp10 and His12. 4-CDP-2-C-methyl-D-erythritol 2-phosphate contacts are provided by residues 10–12 and 36–37; these read DVH and HS. His44 contacts a divalent metal cation. Residues 58 to 60, 63 to 67, and Arg144 each bind 4-CDP-2-C-methyl-D-erythritol 2-phosphate; these read DIG and FSDTD.

This sequence belongs to the IspF family. Homotrimer. It depends on a divalent metal cation as a cofactor.

The catalysed reaction is 4-CDP-2-C-methyl-D-erythritol 2-phosphate = 2-C-methyl-D-erythritol 2,4-cyclic diphosphate + CMP. It participates in isoprenoid biosynthesis; isopentenyl diphosphate biosynthesis via DXP pathway; isopentenyl diphosphate from 1-deoxy-D-xylulose 5-phosphate: step 4/6. Involved in the biosynthesis of isopentenyl diphosphate (IPP) and dimethylallyl diphosphate (DMAPP), two major building blocks of isoprenoid compounds. Catalyzes the conversion of 4-diphosphocytidyl-2-C-methyl-D-erythritol 2-phosphate (CDP-ME2P) to 2-C-methyl-D-erythritol 2,4-cyclodiphosphate (ME-CPP) with a corresponding release of cytidine 5-monophosphate (CMP). This Paraburkholderia phytofirmans (strain DSM 17436 / LMG 22146 / PsJN) (Burkholderia phytofirmans) protein is 2-C-methyl-D-erythritol 2,4-cyclodiphosphate synthase.